Here is a 388-residue protein sequence, read N- to C-terminus: Protein phosphatase 2C 57 (388 aa).

The 290-residue stretch at 59–348 (RWGYTSVQGF…DNISIIIADL (290 aa)) folds into the PPM-type phosphatase domain. Residues Asp93, Gly94, Asp296, and Asp339 each contribute to the Mn(2+) site. The helical transmembrane segment at 363–383 (VVVELVQAATTIGLVTVGIWM) threads the bilayer.

The protein belongs to the PP2C family. It depends on Mg(2+) as a cofactor. Mn(2+) is required as a cofactor.

The protein resides in the membrane. It localises to the plastid. Its subcellular location is the chloroplast stroma. The catalysed reaction is O-phospho-L-seryl-[protein] + H2O = L-seryl-[protein] + phosphate. It carries out the reaction O-phospho-L-threonyl-[protein] + H2O = L-threonyl-[protein] + phosphate. Functionally, protein phosphatase specifically required for efficient dephosphorylation of the light-harvesting complex II outer antennae (LCHII) and transition from state 2 to state 1. State transition plays a central role in response to environmental changes and allows to adjust to changing light conditions via the redistribution of light excitation energy between photosystem II (PSII) and photosystem I (PSI) in a short time by relocating LHCII proteins. Mainly responsible for the dephosphorylation of Lhcb1 and Lhcb2 but not of the photosystem II core proteins. In Arabidopsis thaliana (Mouse-ear cress), this protein is Protein phosphatase 2C 57.